A 971-amino-acid polypeptide reads, in one-letter code: E3 ubiquitin-protein ligase MIB2 (971 aa).

Residues 1 to 80 (MDLDPHAGVQ…AHDLLLYDNA (80 aa)) form the MIB/HERC2 1 domain. Residues 86-138 (HPNIICDCCKKHGLRGMRWKCRVCFDYDLCTQCYMHNKHDLTHAFERYETSHS) form a ZZ-type zinc finger. Zn(2+)-binding residues include Cys91, Cys94, Cys106, Cys109, Cys115, Cys118, His124, and His128. In terms of domain architecture, MIB/HERC2 2 spans 149–227 (LPRIPLRGIF…KVDLKCVGEA (79 aa)). Ser251 is subject to Phosphoserine. ANK repeat units follow at residues 478–507 (QGRT…SVDL), 511–540 (EGNT…GVDA), 544–573 (TRST…DVNL), 577–609 (HADT…DVTA), 613–642 (QGFT…QLVD), 647–677 (DGFT…DVNV), 681–710 (KLQS…NVNT), 714–742 (EGDT…DPGP), and 783–812 (RGRS…ERQA). 2 consecutive RING-type zinc fingers follow at residues 848 to 883 (CLVC…IRCQ) and 927 to 960 (CPIC…PICR).

Interacts with actin monomer. Post-translationally, ubiquitinated. Possibly via autoubiquitination.

It is found in the cytoplasm. The protein resides in the endosome. It catalyses the reaction S-ubiquitinyl-[E2 ubiquitin-conjugating enzyme]-L-cysteine + [acceptor protein]-L-lysine = [E2 ubiquitin-conjugating enzyme]-L-cysteine + N(6)-ubiquitinyl-[acceptor protein]-L-lysine.. It participates in protein modification; protein ubiquitination. In terms of biological role, E3 ubiquitin-protein ligase that mediates ubiquitination of Delta receptors, which act as ligands of Notch proteins. Positively regulates the Delta-mediated Notch signaling by ubiquitinating the intracellular domain of Delta, leading to endocytosis of Delta receptors. The sequence is that of E3 ubiquitin-protein ligase MIB2 (Mib2) from Rattus norvegicus (Rat).